Here is a 146-residue protein sequence, read N- to C-terminus: 3-dehydroquinate dehydratase (146 aa).

The Proton acceptor role is filled by Tyr-24. 3 residues coordinate substrate: Asn-73, His-79, and Asp-86. Residue His-99 is the Proton donor of the active site. Substrate-binding positions include 100 to 101 (LS) and Arg-110.

It belongs to the type-II 3-dehydroquinase family. In terms of assembly, homododecamer.

The enzyme catalyses 3-dehydroquinate = 3-dehydroshikimate + H2O. It participates in metabolic intermediate biosynthesis; chorismate biosynthesis; chorismate from D-erythrose 4-phosphate and phosphoenolpyruvate: step 3/7. Functionally, catalyzes a trans-dehydration via an enolate intermediate. This Shewanella baltica (strain OS195) protein is 3-dehydroquinate dehydratase.